A 580-amino-acid polypeptide reads, in one-letter code: N(6)-adenosine-methyltransferase catalytic subunit METTL3 (580 aa).

The disordered stretch occupies residues 1–70; the sequence is MSDTWSSIQA…PKPSTASAVP (70 aa). S2 is modified (N-acetylserine; alternate). S2 is modified (phosphoserine; alternate). Residues 28–37 show a composition bias toward basic and acidic residues; that stretch reads QDSGHLDLRN. 3 positions are modified to phosphoserine: S43, S48, and S50. Glycyl lysine isopeptide (Lys-Gly) (interchain with G-Cter in SUMO1) cross-links involve residues K177, K211, K212, and K215. The segment at 198 to 219 is disordered; the sequence is LNSSASEPAKEPAKKSRKHAAS. Positions 210-215 match the Nuclear localization signal motif; it reads AKKSRK. S219 and S243 each carry phosphoserine. A Phosphothreonine modification is found at T348. A Phosphoserine modification is found at S350. S-adenosyl-L-methionine-binding positions include 377 to 378 and D395; that span reads DI. The segment at 396-410 is gate loop 1; that stretch reads PPWDIHMELPYGTLT. Interaction with METTL14 stretches follow at residues 450–454 and 464–480; these read ERVDE and QRIIRTGRTGHWLNHGK. The interval 462-479 is interphase loop; it reads QLQRIIRTGRTGHWLNHG. The tract at residues 465-478 is positively charged region required for RNA-binding; the sequence is RIIRTGRTGHWLNH. The tract at residues 507 to 515 is gate loop 2; sequence VRSTSHKPD. Residues K513, 536-539, and 549-550 each bind S-adenosyl-L-methionine; these read RPHN and NQ.

This sequence belongs to the MT-A70-like family. As to quaternary structure, heterodimer; heterodimerizes with METTL14 to form an antiparallel heterodimer that constitutes an active methyltransferase. Component of the WMM complex, a N6-methyltransferase complex composed of a catalytic subcomplex, named MAC, and of an associated subcomplex, named MACOM. The MAC subcomplex is composed of METTL3 and METTL14. The MACOM subcomplex is composed of WTAP, ZC3H13, CBLL1/HAKAI, VIRMA, and, in some cases of RBM15 (RBM15 or RBM15B). Interacts with NCBP1/CBP80. Interacts with EIF4E. Interacts with EIF3B. In terms of processing, sumoylation inhibits the N6-adenosine-methyltransferase activity. Sumoylation does not affect subcellular location or interaction with METTL14. Desumoylated by SENP1. Widely expressed at low level. Expressed in spleen, thymus, prostate, testis, ovary, small intestine, colon and peripheral blood leukocytes.

It is found in the nucleus. The protein localises to the nucleus speckle. It localises to the cytoplasm. It catalyses the reaction an adenosine in mRNA + S-adenosyl-L-methionine = an N(6)-methyladenosine in mRNA + S-adenosyl-L-homocysteine + H(+). Methyltransferase activity is regulated by miRNAs via a sequence pairing mechanism. Methyltransferase activity is inhibited by sumoylation. In terms of biological role, the METTL3-METTL14 heterodimer forms a N6-methyltransferase complex that methylates adenosine residues at the N(6) position of some RNAs and regulates various processes such as the circadian clock, differentiation of embryonic and hematopoietic stem cells, cortical neurogenesis, response to DNA damage, differentiation of T-cells and primary miRNA processing. In the heterodimer formed with METTL14, METTL3 constitutes the catalytic core. N6-methyladenosine (m6A), which takes place at the 5'-[AG]GAC-3' consensus sites of some mRNAs, plays a role in mRNA stability, processing, translation efficiency and editing. M6A acts as a key regulator of mRNA stability: methylation is completed upon the release of mRNA into the nucleoplasm and promotes mRNA destabilization and degradation. In embryonic stem cells (ESCs), m6A methylation of mRNAs encoding key naive pluripotency-promoting transcripts results in transcript destabilization, promoting differentiation of ESCs. M6A regulates the length of the circadian clock: acts as an early pace-setter in the circadian loop by putting mRNA production on a fast-track for facilitating nuclear processing, thereby providing an early point of control in setting the dynamics of the feedback loop. M6A also regulates circadian regulation of hepatic lipid metabolism. M6A regulates spermatogonial differentiation and meiosis and is essential for male fertility and spermatogenesis. Also required for oogenesis. Involved in the response to DNA damage: in response to ultraviolet irradiation, METTL3 rapidly catalyzes the formation of m6A on poly(A) transcripts at DNA damage sites, leading to the recruitment of POLK to DNA damage sites. M6A is also required for T-cell homeostasis and differentiation: m6A methylation of transcripts of SOCS family members (SOCS1, SOCS3 and CISH) in naive T-cells promotes mRNA destabilization and degradation, promoting T-cell differentiation. Inhibits the type I interferon response by mediating m6A methylation of IFNB. M6A also takes place in other RNA molecules, such as primary miRNA (pri-miRNAs). Mediates m6A methylation of Xist RNA, thereby participating in random X inactivation: m6A methylation of Xist leads to target YTHDC1 reader on Xist and promote transcription repression activity of Xist. M6A also regulates cortical neurogenesis: m6A methylation of transcripts related to transcription factors, neural stem cells, the cell cycle and neuronal differentiation during brain development promotes their destabilization and decay, promoting differentiation of radial glial cells. METTL3 mediates methylation of pri-miRNAs, marking them for recognition and processing by DGCR8. Acts as a positive regulator of mRNA translation independently of the methyltransferase activity: promotes translation by interacting with the translation initiation machinery in the cytoplasm. Its overexpression in a number of cancer cells suggests that it may participate in cancer cell proliferation by promoting mRNA translation. During human coronavirus SARS-CoV-2 infection, adds m6A modifications in SARS-CoV-2 RNA leading to decreased RIGI binding and subsequently dampening the sensing and activation of innate immune responses. The sequence is that of N(6)-adenosine-methyltransferase catalytic subunit METTL3 from Homo sapiens (Human).